Here is a 78-residue protein sequence, read N- to C-terminus: Dihydrofolate reductase type 2 (78 aa).

Residues Lys32 and 66–69 (VQIY) each bind NADP(+). Substrate is bound at residue Ile68.

In terms of assembly, homotetramer.

It catalyses the reaction (6S)-5,6,7,8-tetrahydrofolate + NADP(+) = 7,8-dihydrofolate + NADPH + H(+). The protein operates within cofactor biosynthesis; tetrahydrofolate biosynthesis; 5,6,7,8-tetrahydrofolate from 7,8-dihydrofolate: step 1/1. In terms of biological role, key enzyme in folate metabolism. Catalyzes an essential reaction for de novo glycine and purine synthesis, and for DNA precursor synthesis. The chain is Dihydrofolate reductase type 2 from Escherichia coli.